We begin with the raw amino-acid sequence, 346 residues long: GTPase Obg (346 aa).

The Obg domain maps to 1-158 (MFVDECVVKL…GTYRLVLKSI (158 aa)). Residues 159–332 (ADVGLVGFPN…LKKELLKRVT (174 aa)) form the OBG-type G domain. GTP is bound by residues 165-172 (GFPNAGKS), 190-194 (FTTLH), 216-219 (DVPG), 286-289 (NKMD), and 313-315 (SCL). Ser-172 and Thr-192 together coordinate Mg(2+).

Belongs to the TRAFAC class OBG-HflX-like GTPase superfamily. OBG GTPase family. Monomer. It depends on Mg(2+) as a cofactor.

Its subcellular location is the cytoplasm. Its function is as follows. An essential GTPase which binds GTP, GDP and possibly (p)ppGpp with moderate affinity, with high nucleotide exchange rates and a fairly low GTP hydrolysis rate. Plays a role in control of the cell cycle, stress response, ribosome biogenesis and in those bacteria that undergo differentiation, in morphogenesis control. The polypeptide is GTPase Obg (Opitutus terrae (strain DSM 11246 / JCM 15787 / PB90-1)).